Here is a 378-residue protein sequence, read N- to C-terminus: Serpin B6 (378 aa).

Met1 bears the N-acetylmethionine mark. N6-acetyllysine is present on Lys196.

Belongs to the serpin family. Ov-serpin subfamily. As to quaternary structure, forms a complex with the monomeric form of beta-tryptase. In terms of tissue distribution, brain.

The protein resides in the cytoplasm. Functionally, inhibitor of cathepsin G, kallikrein-8 and thrombin. May play an important role in the inner ear in the protection against leakage of lysosomal content during stress. May be involved in the regulation of serine proteinases present in the brain or extravasated from the blood. This Bos taurus (Bovine) protein is Serpin B6 (SERPINB6).